We begin with the raw amino-acid sequence, 689 residues long: MSGRNNNKLPTNLPQLQNLIKRDPASYREEFLQQYKHYLSVIEIFKLQPDKPNKDLSTLVMFMAQTAHCFQQYLEDFPEQLKSLLCTHHTVMDPDQRMTLCKALIMLRNKNLISPSVLLELFFELLRCQDKLLRKTLYTHIVTDIKNINAKHKNNKVNTTLQNFMYTMLRDNNAIAAKISLDVMIELYRRNIWNDAKTVNVITTACFSKVTKILVAALKFFLGKDEDEKKDSDSESEDEGPTARDLMVRYSTGKKNTKNKKKLDKAMKVLKKHKKKKRPEVFNFSAIHLVHDPQEFAEKLLKQLEASKERFEVKLMHMDLISRLVGIHELFLFNFYPFVQRFLQPHQREVTKILLYAAQATHHLVPPEISQSVLKTIANNFVTDRNSGEVMTVGINAIKEVTARCPLAMTEELLQDLAQYKTHRDKNVSMSARGLIQLFRSLNPDMLQKKFRGKPTEASKEARIHAYGELDAKDYIPGAEVLEVEQEKKEEPEEDDGWESASLSDDDEDGEWIDVHHSSDEEQQEMAEKIQAMPTEERIAKAATVSGSRLLTQEDFKKIRLAQLAKEMNNAPGKSMKRKNIEIDSDEEERSGELLSLRDIEHLHKKPKSDKETRLATVLAGRTDRKEFVRKKTKMNPHASSTNKEKKKNKNFMMMRYSQNIRSKKKRSFRDKQIALRDSLLKKRKRLMK.

Disordered regions lie at residues 227–260, 485–512, and 623–689; these read DEKKDSDSESEDEGPTARDLMVRYSTGKKNTKNK, EQEKKEEPEEDDGWESASLSDDDEDGEW, and TDRK…RLMK. Residues 258 to 319 are a coiled coil; it reads KNKKKLDKAM…RFEVKLMHMD (62 aa). The segment covering 492–512 has biased composition (acidic residues); that stretch reads PEEDDGWESASLSDDDEDGEW. Basic and acidic residues predominate over residues 670–681; the sequence is RDKQIALRDSLL.

This sequence belongs to the SDA1 family.

Its subcellular location is the nucleus. The protein resides in the nucleolus. Required for 60S pre-ribosomal subunits export to the cytoplasm. The chain is Protein SDA1 homolog (sdad1) from Xenopus laevis (African clawed frog).